The chain runs to 436 residues: Glutamyl-tRNA reductase 2 (436 aa).

Substrate-binding positions include Thr49 to Arg52, Ser106, Glu111 to Gln113, and Gln117. Cys50 functions as the Nucleophile in the catalytic mechanism. Gly186–Cys191 contacts NADP(+).

Belongs to the glutamyl-tRNA reductase family. As to quaternary structure, homodimer.

The catalysed reaction is (S)-4-amino-5-oxopentanoate + tRNA(Glu) + NADP(+) = L-glutamyl-tRNA(Glu) + NADPH + H(+). It participates in porphyrin-containing compound metabolism; protoporphyrin-IX biosynthesis; 5-aminolevulinate from L-glutamyl-tRNA(Glu): step 1/2. Functionally, catalyzes the NADPH-dependent reduction of glutamyl-tRNA(Glu) to glutamate 1-semialdehyde (GSA). The chain is Glutamyl-tRNA reductase 2 from Koribacter versatilis (strain Ellin345).